Reading from the N-terminus, the 152-residue chain is Small ribosomal subunit protein uS11B (152 aa).

The interval 131–152 (EDVTPIPSDSTRRKGGRRGRRL) is disordered. Residues 143–152 (RKGGRRGRRL) show a composition bias toward basic residues.

This sequence belongs to the universal ribosomal protein uS11 family.

The protein is Small ribosomal subunit protein uS11B of Anopheles gambiae (African malaria mosquito).